The chain runs to 430 residues: Serine--tRNA ligase (430 aa).

Residue threonine 236–glutamate 238 coordinates L-serine. Arginine 267 to glutamate 269 serves as a coordination point for ATP. Residue glutamate 290 participates in L-serine binding. Glutamate 354–serine 357 contributes to the ATP binding site. Residue serine 390 participates in L-serine binding.

Belongs to the class-II aminoacyl-tRNA synthetase family. Type-1 seryl-tRNA synthetase subfamily. As to quaternary structure, homodimer. The tRNA molecule binds across the dimer.

The protein resides in the cytoplasm. The enzyme catalyses tRNA(Ser) + L-serine + ATP = L-seryl-tRNA(Ser) + AMP + diphosphate + H(+). It catalyses the reaction tRNA(Sec) + L-serine + ATP = L-seryl-tRNA(Sec) + AMP + diphosphate + H(+). It participates in aminoacyl-tRNA biosynthesis; selenocysteinyl-tRNA(Sec) biosynthesis; L-seryl-tRNA(Sec) from L-serine and tRNA(Sec): step 1/1. In terms of biological role, catalyzes the attachment of serine to tRNA(Ser). Is also able to aminoacylate tRNA(Sec) with serine, to form the misacylated tRNA L-seryl-tRNA(Sec), which will be further converted into selenocysteinyl-tRNA(Sec). The sequence is that of Serine--tRNA ligase from Gloeothece citriformis (strain PCC 7424) (Cyanothece sp. (strain PCC 7424)).